The chain runs to 411 residues: Multidrug resistance protein MdtA (411 aa).

A signal peptide spans 1–19 (MNAKRIRGLLILAAVIAIA). The segment covering 31-49 (PAAPGTSEQHAARTSHSEN) has biased composition (polar residues). Residues 31–58 (PAAPGTSEQHAARTSHSENSGSGGGRRA) form a disordered region.

This sequence belongs to the membrane fusion protein (MFP) (TC 8.A.1) family. In terms of assembly, part of a tripartite efflux system composed of MdtA, MdtB and MdtC.

The protein resides in the cell inner membrane. This Pectobacterium atrosepticum (strain SCRI 1043 / ATCC BAA-672) (Erwinia carotovora subsp. atroseptica) protein is Multidrug resistance protein MdtA.